Consider the following 455-residue polypeptide: Phosphoglucosamine mutase (455 aa).

The active-site Phosphoserine intermediate is the Ser-102. Positions 102, 241, 243, and 245 each coordinate Mg(2+). Ser-102 bears the Phosphoserine mark.

Belongs to the phosphohexose mutase family. Requires Mg(2+) as cofactor. Activated by phosphorylation.

It carries out the reaction alpha-D-glucosamine 1-phosphate = D-glucosamine 6-phosphate. Its function is as follows. Catalyzes the conversion of glucosamine-6-phosphate to glucosamine-1-phosphate. In Legionella pneumophila (strain Lens), this protein is Phosphoglucosamine mutase.